The following is a 106-amino-acid chain: Transcription and mRNA export factor SUS1 (106 aa).

The protein belongs to the ENY2 family. As to quaternary structure, component of the nuclear pore complex (NPC)-associated TREX-2 complex (transcription and export complex 2), composed of at least SUS1, SAC3, THP1, SEM1, and CDC31. TREX-2 contains 2 SUS1 chains. The TREX-2 complex interacts with the nucleoporin NUP1. Component of the 1.8 MDa SAGA transcription coactivator-HAT complex. SAGA is built of 5 distinct domains with specialized functions. Within the SAGA complex, SUS1, SGF11, SGF73 and UBP8 form an additional subcomplex of SAGA called the DUB module (deubiquitination module). Interacts directly with THP1, SAC3, SGF11, and with the RNA polymerase II.

Its subcellular location is the nucleus. It is found in the nucleoplasm. The protein localises to the cytoplasm. It localises to the P-body. Involved in mRNA export coupled transcription activation by association with both the TREX-2 and the SAGA complexes. At the promoters, SAGA is required for recruitment of the basal transcription machinery. It influences RNA polymerase II transcriptional activity through different activities such as TBP interaction and promoter selectivity, interaction with transcription activators, and chromatin modification through histone acetylation and deubiquitination. Within the SAGA complex, participates in a subcomplex required for deubiquitination of H2B and for the maintenance of steady-state H3 methylation levels. The TREX-2 complex functions in docking export-competent ribonucleoprotein particles (mRNPs) to the nuclear entrance of the nuclear pore complex (nuclear basket). TREX-2 participates in mRNA export and accurate chromatin positioning in the nucleus by tethering genes to the nuclear periphery. May also be involved in cytoplasmic mRNA decay by interaction with components of P-bodies. In Mycosarcoma maydis (Corn smut fungus), this protein is Transcription and mRNA export factor SUS1.